We begin with the raw amino-acid sequence, 119 residues long: Large ribosomal subunit protein uL18 (119 aa).

This sequence belongs to the universal ribosomal protein uL18 family. Part of the 50S ribosomal subunit; part of the 5S rRNA/L5/L18/L25 subcomplex. Contacts the 5S and 23S rRNAs.

This is one of the proteins that bind and probably mediate the attachment of the 5S RNA into the large ribosomal subunit, where it forms part of the central protuberance. The chain is Large ribosomal subunit protein uL18 from Chelativorans sp. (strain BNC1).